The chain runs to 221 residues: Probable glutathione S-transferase parC (221 aa).

Residues 4 to 83 (EEVILLDFWP…YIEEVWKDKA (80 aa)) form the GST N-terminal domain. Glutathione contacts are provided by residues Ser14, Lys41, Ile55, and 67–68 (ES). The GST C-terminal domain maps to 90–214 (DPYDRAQARF…PKVLEFVKVL (125 aa)).

This sequence belongs to the GST superfamily. Phi family. Abundant in seedlings and roots. It is also found in the shoot tips, flowers and leaves.

The catalysed reaction is RX + glutathione = an S-substituted glutathione + a halide anion + H(+). In terms of biological role, conjugation of reduced glutathione to a wide number of exogenous and endogenous hydrophobic electrophiles. This Nicotiana tabacum (Common tobacco) protein is Probable glutathione S-transferase parC (PARC).